We begin with the raw amino-acid sequence, 153 residues long: Interleukin-17A (153 aa).

Residues 1 to 23 (MASMRTSSMSLLLLLSLVALVKA) form the signal peptide. A glycan (N-linked (GlcNAc...) asparagine) is linked at Asn53. Positions 56–76 (TNSRRPTDYHKRSTSPWTLHR) are disordered. 2 disulfides stabilise this stretch: Cys92–Cys142 and Cys97–Cys144.

This sequence belongs to the IL-17 family. As to quaternary structure, homodimer. Forms complexes with IL17RA and IL17RC receptors with 2:1 binding stoichiometry: two receptor chains for one interleukin molecule. IL17A homodimer preferentially drives the formation of IL17RA-IL17RC heterodimeric receptor complex. IL17A homodimer adopts an asymmetrical ternary structure with one IL17RA molecule, allowing for high affinity interactions of one IL17A monomer with one IL17RA molecule (via D1 and D2 domains), while disfavoring binding of a second IL17RA molecule on the other IL17A monomer. Heterodimer with IL17F. IL17A-IL17F forms complexes with IL17RA-IL17RC, but with lower affinity when compared to IL17A homodimer. IL17RA and IL17RC chains cannot distinguish between IL17A and IL17F molecules, potentially enabling the formation of topologically distinct complexes.

The protein localises to the secreted. In terms of biological role, effector cytokine of innate and adaptive immune system involved in antimicrobial host defense and maintenance of tissue integrity. Signals via IL17RA-IL17RC heterodimeric receptor complex, triggering homotypic interaction of IL17RA and IL17RC chains with TRAF3IP2 adapter. This leads to downstream TRAF6-mediated activation of NF-kappa-B and MAPkinase pathways ultimately resulting in transcriptional activation of cytokines, chemokines, antimicrobial peptides and matrix metalloproteinases, with potential strong immune inflammation. Plays an important role in connecting T cell-mediated adaptive immunity and acute inflammatory response to destroy extracellular bacteria and fungi. As a signature effector cytokine of T-helper 17 cells (Th17), primarily induces neutrophil activation and recruitment at infection and inflammatory sites. In airway epithelium, mediates neutrophil chemotaxis via induction of CXCL1 and CXCL5 chemokines. In secondary lymphoid organs, contributes to germinal center formation by regulating the chemotactic response of B cells to CXCL12 and CXCL13, enhancing retention of B cells within the germinal centers, B cell somatic hypermutation rate and selection toward plasma cells. Effector cytokine of a subset of gamma-delta T cells that functions as part of an inflammatory circuit downstream IL1B, TLR2 and IL23A-IL12B to promote neutrophil recruitment for efficient bacterial clearance. Effector cytokine of innate immune cells including invariant natural killer cell (iNKT) and group 3 innate lymphoid cells that mediate initial neutrophilic inflammation. Involved in the maintenance of the integrity of epithelial barriers during homeostasis and pathogen infection. Upon acute injury, has a direct role in epithelial barrier formation by regulating OCLN localization and tight junction biogenesis. As part of the mucosal immune response induced by commensal bacteria, enhances host's ability to resist pathogenic bacterial and fungal infections by promoting neutrophil recruitment and antimicrobial peptides release. In synergy with IL17F, mediates the production of antimicrobial beta-defensins DEFB1, DEFB103A, and DEFB104A by mucosal epithelial cells, limiting the entry of microbes through the epithelial barriers. Involved in antiviral host defense through various mechanisms. Enhances immunity against West Nile virus by promoting T cell cytotoxicity. May play a beneficial role in influenza A virus (H5N1) infection by enhancing B cell recruitment and immune response in the lung. Contributes to influenza A virus (H1N1) clearance by driving the differentiation of B-1a B cells, providing for production of virus-specific IgM antibodies at first line of host defense. The polypeptide is Interleukin-17A (IL17A) (Bos taurus (Bovine)).